A 165-amino-acid polypeptide reads, in one-letter code: MRLTSKGRYAVTAMLDVALHSGKGPVPLAEISERQGISLSYLEQLFSRLRKHELVASVRGPGGGYLLGRDSDQIAVGAVITAVDESVDATRCQGKEGCQGGDRCLTHVLWRDLSVRISEFLNNITLAELVSNEEILDVVDRQDNDTRRPLTNGRPQETINVNLHA.

One can recognise an HTH rrf2-type domain in the interval 2-131; that stretch reads RLTSKGRYAV…NNITLAELVS (130 aa). Positions 28-51 form a DNA-binding region, H-T-H motif; that stretch reads LAEISERQGISLSYLEQLFSRLRK. [2Fe-2S] cluster is bound by residues Cys-92, Cys-98, and Cys-104. Positions 144–165 are disordered; sequence NDTRRPLTNGRPQETINVNLHA. A compositionally biased stretch (polar residues) spans 153 to 165; sequence GRPQETINVNLHA.

Requires [2Fe-2S] cluster as cofactor.

In terms of biological role, regulates the transcription of several operons and genes involved in the biogenesis of Fe-S clusters and Fe-S-containing proteins. The polypeptide is HTH-type transcriptional regulator IscR (Sodalis glossinidius (strain morsitans)).